The chain runs to 260 residues: Ribonuclease PH (260 aa).

Phosphate contacts are provided by residues Arg-88 and 126–128; that span reads GTR.

The protein belongs to the RNase PH family. Homohexameric ring arranged as a trimer of dimers.

The enzyme catalyses tRNA(n+1) + phosphate = tRNA(n) + a ribonucleoside 5'-diphosphate. Phosphorolytic 3'-5' exoribonuclease that plays an important role in tRNA 3'-end maturation. Removes nucleotide residues following the 3'-CCA terminus of tRNAs; can also add nucleotides to the ends of RNA molecules by using nucleoside diphosphates as substrates, but this may not be physiologically important. Probably plays a role in initiation of 16S rRNA degradation (leading to ribosome degradation) during starvation. This Mycobacterium sp. (strain JLS) protein is Ribonuclease PH.